The primary structure comprises 113 residues: U10-theraphotoxin-Hs2a (113 aa).

The signal sequence occupies residues Met1–Ala21. A propeptide spanning residues Asp22 to Arg67 is cleaved from the precursor. 3 disulfide bridges follow: Cys68–Cys86, Cys75–Cys91, and Cys85–Cys106.

Belongs to the neurotoxin 14 (magi-1) family. 02 (HWTX-XVIc) subfamily. As to expression, expressed by the venom gland.

It is found in the secreted. Its function is as follows. Probable ion channel inhibitor. This is U10-theraphotoxin-Hs2a from Cyriopagopus schmidti (Chinese bird spider).